The chain runs to 523 residues: GMP synthase [glutamine-hydrolyzing] (523 aa).

Positions Pro9–Asn198 constitute a Glutamine amidotransferase type-1 domain. The Nucleophile role is filled by Cys86. Residues His172 and Glu174 contribute to the active site. The region spanning Trp199–Arg397 is the GMPS ATP-PPase domain. Ser227–Ala233 lines the ATP pocket.

In terms of assembly, homodimer.

The catalysed reaction is XMP + L-glutamine + ATP + H2O = GMP + L-glutamate + AMP + diphosphate + 2 H(+). It participates in purine metabolism; GMP biosynthesis; GMP from XMP (L-Gln route): step 1/1. Functionally, catalyzes the synthesis of GMP from XMP. This Corynebacterium glutamicum (strain ATCC 13032 / DSM 20300 / JCM 1318 / BCRC 11384 / CCUG 27702 / LMG 3730 / NBRC 12168 / NCIMB 10025 / NRRL B-2784 / 534) protein is GMP synthase [glutamine-hydrolyzing].